We begin with the raw amino-acid sequence, 223 residues long: Phosphoenolpyruvate guanylyltransferase (223 aa).

3 residues coordinate phosphoenolpyruvate: Thr-140, Gly-156, and Ser-159.

Belongs to the CofC family.

The enzyme catalyses phosphoenolpyruvate + GTP + H(+) = enolpyruvoyl-2-diphospho-5'-guanosine + diphosphate. Its pathway is cofactor biosynthesis; coenzyme F420 biosynthesis. Its function is as follows. Guanylyltransferase that catalyzes the activation of phosphoenolpyruvate (PEP) as enolpyruvoyl-2-diphospho-5'-guanosine, via the condensation of PEP with GTP. It is involved in the biosynthesis of coenzyme F420, a hydride carrier cofactor. The protein is Phosphoenolpyruvate guanylyltransferase of Conexibacter woesei (strain DSM 14684 / CCUG 47730 / CIP 108061 / JCM 11494 / NBRC 100937 / ID131577).